The chain runs to 288 residues: Alpha/beta hydrolase domain-containing protein 17B (288 aa).

Active-site charge relay system residues include Ser170, Asp235, and His264. A Phosphoserine modification is found at Ser282.

This sequence belongs to the AB hydrolase superfamily. ABHD17 family. Post-translationally, palmitoylated on cysteine residues located in a cysteine cluster at the N-terminus which promotes membrane localization. Palmitoylation is required for post-synaptic localization and for depalmitoylating activity towards DLG4/PSD95.

The protein resides in the cell membrane. It is found in the recycling endosome membrane. Its subcellular location is the cell projection. The protein localises to the dendritic spine. It localises to the postsynaptic density membrane. It carries out the reaction S-hexadecanoyl-L-cysteinyl-[protein] + H2O = L-cysteinyl-[protein] + hexadecanoate + H(+). Its activity is regulated as follows. Inhibited by palmostatin-B. Hydrolyzes fatty acids from S-acylated cysteine residues in proteins. Has depalmitoylating activity towards DLG4/PSD95. Has depalmitoylating activity towards GAP43. Has depalmitoylating activity towards MAP6. Has depalmitoylating activity towards NRAS. In Homo sapiens (Human), this protein is Alpha/beta hydrolase domain-containing protein 17B.